We begin with the raw amino-acid sequence, 362 residues long: Adenosine deaminase (362 aa).

H19 and H21 together coordinate Zn(2+). Substrate is bound by residues H21, D23, and G181. H208 serves as a coordination point for Zn(2+). The active-site Proton donor is the E211. A Zn(2+)-binding site is contributed by D300.

The protein belongs to the metallo-dependent hydrolases superfamily. Adenosine and AMP deaminases family. Adenosine deaminase subfamily. The cofactor is Zn(2+).

The enzyme catalyses adenosine + H2O + H(+) = inosine + NH4(+). It carries out the reaction 2'-deoxyadenosine + H2O + H(+) = 2'-deoxyinosine + NH4(+). Functionally, catalyzes the hydrolytic deamination of adenosine and 2-deoxyadenosine. The polypeptide is Adenosine deaminase (Mycobacterium sp. (strain JLS)).